A 647-amino-acid polypeptide reads, in one-letter code: 1-phosphatidylinositol 4,5-bisphosphate phosphodiesterase zeta-1 (647 aa).

One can recognise an EF-hand domain in the interval 43-78 (CHFAHVKHIFKENDRQNQGRITIEEFRAIYRCIVHR). A PI-PLC X-box domain is found at 163–307 (QDMNHPLSDY…LKFKILVKNR (145 aa)). Catalysis depends on residues H178 and H223. The PI-PLC Y-box domain maps to 386–502 (LSDLVIYTKA…GYILKPDILR (117 aa)). Residues 502–627 (RDTTLGFNPN…KGYRRVPLFS (126 aa)) enclose the C2 domain.

Interacts via its C2 domain with PtdIns(3)P and, to a lesser extent, PtdIns(5)P in vitro. Ca(2+) is required as a cofactor. In terms of tissue distribution, highly expressed in postpuberal testis, where expression is sperm cell-specific. Also expressed in brain of both sexes.

The protein resides in the nucleus. Its subcellular location is the cytoplasm. It localises to the perinuclear region. It catalyses the reaction a 1,2-diacyl-sn-glycero-3-phospho-(1D-myo-inositol-4,5-bisphosphate) + H2O = 1D-myo-inositol 1,4,5-trisphosphate + a 1,2-diacyl-sn-glycerol + H(+). In terms of biological role, the production of the second messenger molecules diacylglycerol (DAG) and inositol 1,4,5-trisphosphate (IP3) is mediated by activated phosphatidylinositol-specific phospholipase C enzymes. In vitro, hydrolyzes PtdIns(4,5)P2 in a Ca(2+)-dependent manner. Triggers intracellular Ca(2+) oscillations in oocytes solely during M phase and is involved in inducing oocyte activation and initiating embryonic development up to the blastocyst stage. Is therefore a strong candidate for the egg-activating soluble sperm factor that is transferred from the sperm into the egg cytoplasm following gamete membrane fusion. May exert an inhibitory effect on phospholipase-C-coupled processes that depend on calcium ions and protein kinase C, including CFTR trafficking and function. The chain is 1-phosphatidylinositol 4,5-bisphosphate phosphodiesterase zeta-1 from Mus musculus (Mouse).